A 433-amino-acid chain; its full sequence is Keratin, type I cytoskeletal 17 (433 aa).

The segment at 1–24 is disordered; that stretch reads MTTTIRQFTSSSSIKGSSGLGGGS. Residues 1-83 form a head region; the sequence is MTTTIRQFTS…GGVDGLLAGG (83 aa). S12 and S13 each carry phosphoserine. K15 participates in a covalent cross-link: Glycyl lysine isopeptide (Lys-Gly) (interchain with G-Cter in SUMO1); alternate. K15 is covalently cross-linked (Glycyl lysine isopeptide (Lys-Gly) (interchain with G-Cter in SUMO2); alternate). S25, S32, S34, and S39 each carry phosphoserine. Position 44 is a phosphoserine; by RPS6KA1 (S44). The coil 1A stretch occupies residues 84-120; that stretch reads EKATMQNLNDRLASYLDKVRALEEANTELEVKIRDWY. The region spanning 84 to 395 is the IF rod domain; it reads EKATMQNLND…RLLEGEDAHL (312 aa). Phosphothreonine is present on T110. Residues 121–138 form a linker 1 region; the sequence is QKQAPGPARDYSAYYHTI. Positions 139–230 are coil 1B; the sequence is EDLKNKILVA…NHEEEMNALR (92 aa). Residues 231–250 are linker 12; that stretch reads GQVGGEINVEMDAAPGVDLS. The interval 251-392 is coil 2; sequence RILSEMRDQY…TYRRLLEGED (142 aa). A Glycyl lysine isopeptide (Lys-Gly) (interchain with G-Cter in SUMO2) cross-link involves residue K278. T279 carries the post-translational modification Phosphothreonine. S323 is modified (phosphoserine). Residues 393–433 are tail; it reads AHLTQYKPKEPVTTRQVRTIVEEVQDGKVISSREQVHQTTR. Glycyl lysine isopeptide (Lys-Gly) (interchain with G-Cter in SUMO1); alternate cross-links involve residues K399, K401, and K420. Residues K399, K401, and K420 each participate in a glycyl lysine isopeptide (Lys-Gly) (interchain with G-Cter in SUMO2); alternate cross-link.

It belongs to the intermediate filament family. Heterodimer of a type I and a type II keratin. KRT17 associates with KRT6 isomers (KRT6A or KRT6B). Interacts with TRADD and SFN. Post-translationally, phosphorylation at Ser-44 occurs in a growth- and stress-dependent fashion in skin keratinocytes, it has no effect on filament organization. As to expression, expressed strongly in outer root sheath and medulla region of hair follicle and in the early differentiating epithelial cells (trichocytes) within the hair bulb region. Weak expression in the matrix cells of hair bulb. Also present in the sweat gland within the skin, vibrissae follicle, salivary gland, tooth and thymus.

It localises to the cytoplasm. Functionally, type I keratin involved in the formation and maintenance of various skin appendages, specifically in determining shape and orientation of hair. Required for the correct growth of hair follicles, in particular for the persistence of the anagen (growth) state. Modulates the function of TNF-alpha in the specific context of hair cycling. Regulates protein synthesis and epithelial cell growth through binding to the adapter protein SFN and by stimulating Akt/mTOR pathway. Involved in tissue repair. May be a marker of basal cell differentiation in complex epithelia and therefore indicative of a certain type of epithelial 'stem cells'. Acts as a promoter of epithelial proliferation by acting a regulator of immune response in skin: promotes Th1/Th17-dominated immune environment contributing to the development of basaloid skin tumors. May act as an autoantigen in the immunopathogenesis of psoriasis, with certain peptide regions being a major target for autoreactive T-cells and hence causing their proliferation. The protein is Keratin, type I cytoskeletal 17 (Krt17) of Mus musculus (Mouse).